Here is a 332-residue protein sequence, read N- to C-terminus: Glycerol-3-phosphate dehydrogenase [NAD(P)+] (332 aa).

Residues Ser11, Phe12, Arg32, and Lys106 each coordinate NADPH. Sn-glycerol 3-phosphate-binding residues include Lys106, Gly134, and Ser136. Ala138 contributes to the NADPH binding site. Residues Lys189, Asp242, Ser252, Arg253, and Asn254 each coordinate sn-glycerol 3-phosphate. The active-site Proton acceptor is the Lys189. Residue Arg253 participates in NADPH binding. 2 residues coordinate NADPH: Val277 and Glu279.

It belongs to the NAD-dependent glycerol-3-phosphate dehydrogenase family.

Its subcellular location is the cytoplasm. The catalysed reaction is sn-glycerol 3-phosphate + NAD(+) = dihydroxyacetone phosphate + NADH + H(+). It carries out the reaction sn-glycerol 3-phosphate + NADP(+) = dihydroxyacetone phosphate + NADPH + H(+). It participates in membrane lipid metabolism; glycerophospholipid metabolism. In terms of biological role, catalyzes the reduction of the glycolytic intermediate dihydroxyacetone phosphate (DHAP) to sn-glycerol 3-phosphate (G3P), the key precursor for phospholipid synthesis. The sequence is that of Glycerol-3-phosphate dehydrogenase [NAD(P)+] from Clostridium acetobutylicum (strain ATCC 824 / DSM 792 / JCM 1419 / IAM 19013 / LMG 5710 / NBRC 13948 / NRRL B-527 / VKM B-1787 / 2291 / W).